Consider the following 208-residue polypeptide: Large ribosomal subunit protein bL9 (208 aa).

The interval 168 to 208 (GKVEKGSCTEGESLELGSVDNDINSGNVDSNESEKQDSVSE) is disordered. A compositionally biased stretch (polar residues) spans 188-197 (NDINSGNVDS). Over residues 199–208 (ESEKQDSVSE) the composition is skewed to basic and acidic residues.

It belongs to the bacterial ribosomal protein bL9 family.

Its function is as follows. Binds to the 23S rRNA. This Ehrlichia chaffeensis (strain ATCC CRL-10679 / Arkansas) protein is Large ribosomal subunit protein bL9.